Reading from the N-terminus, the 1073-residue chain is Carbamoyl phosphate synthase large chain (1073 aa).

The carboxyphosphate synthetic domain stretch occupies residues 2-403 (PKRTDIKSIL…SLQKALRGLE (402 aa)). Positions 129, 169, 175, 176, 208, 210, 215, 241, 242, 243, 285, and 299 each coordinate ATP. In terms of domain architecture, ATP-grasp 1 spans 133–328 (DVAMKKIGLE…IAKVAAKLAV (196 aa)). Mg(2+) contacts are provided by glutamine 285, glutamate 299, and asparagine 301. Residues glutamine 285, glutamate 299, and asparagine 301 each contribute to the Mn(2+) site. Positions 404 to 553 (VGATGFDPKV…YSTYEEECEA (150 aa)) are oligomerization domain. Residues 554–936 (NPSTDREKIM…AFAKAQLGSN (383 aa)) form a carbamoyl phosphate synthetic domain region. The ATP-grasp 2 domain maps to 679 to 870 (QHAVDRLKLK…LAKVAARVMA (192 aa)). 10 residues coordinate ATP: arginine 715, histidine 754, leucine 756, glutamate 761, glycine 786, valine 787, histidine 788, serine 789, glutamine 829, and glutamate 841. Residues glutamine 829, glutamate 841, and asparagine 843 each contribute to the Mg(2+) site. Mn(2+)-binding residues include glutamine 829, glutamate 841, and asparagine 843. One can recognise an MGS-like domain in the interval 937 to 1073 (STMKKHGRAL…SVQEMHAQIK (137 aa)). Residues 937 to 1073 (STMKKHGRAL…SVQEMHAQIK (137 aa)) form an allosteric domain region.

This sequence belongs to the CarB family. As to quaternary structure, composed of two chains; the small (or glutamine) chain promotes the hydrolysis of glutamine to ammonia, which is used by the large (or ammonia) chain to synthesize carbamoyl phosphate. Tetramer of heterodimers (alpha,beta)4. Mg(2+) serves as cofactor. Mn(2+) is required as a cofactor.

The enzyme catalyses hydrogencarbonate + L-glutamine + 2 ATP + H2O = carbamoyl phosphate + L-glutamate + 2 ADP + phosphate + 2 H(+). It carries out the reaction hydrogencarbonate + NH4(+) + 2 ATP = carbamoyl phosphate + 2 ADP + phosphate + 2 H(+). Its pathway is amino-acid biosynthesis; L-arginine biosynthesis; carbamoyl phosphate from bicarbonate: step 1/1. It participates in pyrimidine metabolism; UMP biosynthesis via de novo pathway; (S)-dihydroorotate from bicarbonate: step 1/3. Functionally, large subunit of the glutamine-dependent carbamoyl phosphate synthetase (CPSase). CPSase catalyzes the formation of carbamoyl phosphate from the ammonia moiety of glutamine, carbonate, and phosphate donated by ATP, constituting the first step of 2 biosynthetic pathways, one leading to arginine and/or urea and the other to pyrimidine nucleotides. The large subunit (synthetase) binds the substrates ammonia (free or transferred from glutamine from the small subunit), hydrogencarbonate and ATP and carries out an ATP-coupled ligase reaction, activating hydrogencarbonate by forming carboxy phosphate which reacts with ammonia to form carbamoyl phosphate. This is Carbamoyl phosphate synthase large chain from Escherichia coli O157:H7.